The following is a 474-amino-acid chain: GTPase Der (474 aa).

2 consecutive EngA-type G domains span residues 2–166 (LRIA…NVPE) and 212–385 (LKIA…ETVS). GTP is bound by residues 8–15 (GRPNVGKS), 55–59 (DTGGV), 118–121 (NKAD), 218–225 (GRPNVGKS), 265–269 (DTAGL), and 330–333 (NKWD). Residues 386 to 470 (SKVPTPVVNK…PFDLEFKEKT (85 aa)) enclose the KH-like domain.

The protein belongs to the TRAFAC class TrmE-Era-EngA-EngB-Septin-like GTPase superfamily. EngA (Der) GTPase family. Associates with the 50S ribosomal subunit.

Its function is as follows. GTPase that plays an essential role in the late steps of ribosome biogenesis. This is GTPase Der from Chlamydia caviae (strain ATCC VR-813 / DSM 19441 / 03DC25 / GPIC) (Chlamydophila caviae).